Reading from the N-terminus, the 207-residue chain is MSARGNLFIVSAPSGAGKSSLITALLKDKPQDMQVSVSHTTRAPRPGEVDGQHYHFVSVEQFKALIAENAFFESAEVFGNFYGTSRQVIENTLSLGIDVFLDIDWQGAQQVKKIMPEAIGVFILPPSKAELERRLTGRGQDSSDVIAARMAQAVSEMSHYNEYDFVIINDDFEQALADLKSIIFSQRLTCASQFHTHNDMLVDLLAD.

A Guanylate kinase-like domain is found at 5-184; sequence GNLFIVSAPS…ALADLKSIIF (180 aa). An ATP-binding site is contributed by 12–19; sequence APSGAGKS.

The protein belongs to the guanylate kinase family.

Its subcellular location is the cytoplasm. The catalysed reaction is GMP + ATP = GDP + ADP. Functionally, essential for recycling GMP and indirectly, cGMP. The chain is Guanylate kinase from Shewanella denitrificans (strain OS217 / ATCC BAA-1090 / DSM 15013).